Consider the following 506-residue polypeptide: Sodium transporter HKT1 (506 aa).

Residues Met1–Arg19 lie on the Cytoplasmic side of the membrane. A helical transmembrane segment spans residues Ser20–Leu40. Residues Lys41–Gln81 lie on the Extracellular side of the membrane. A helical membrane pass occupies residues Leu82–Leu102. Topologically, residues Tyr103–Ser159 are cytoplasmic. A helical transmembrane segment spans residues Val160–Val180. Over Asn181–Trp232 the chain is Extracellular. Residues Leu233–Ile253 form a helical membrane-spanning segment. Topologically, residues Trp254–Cys286 are cytoplasmic. Residues Val287 to Phe307 form a helical membrane-spanning segment. Residues Glu308–Pro348 lie on the Extracellular side of the membrane. A helical transmembrane segment spans residues Ala349–Leu369. Over Thr370–Lys392 the chain is Cytoplasmic. A helical transmembrane segment spans residues Ser393–Thr413. The Extracellular portion of the chain corresponds to Glu414–Tyr465. An N-linked (GlcNAc...) asparagine glycan is attached at Asn429. The chain crosses the membrane as a helical span at residues Gly466–Gly486. The Cytoplasmic segment spans residues Arg487–Ser506.

This sequence belongs to the TrkH potassium transport family. HKT (TC 2.A.38.3) subfamily. In terms of processing, N-glycosylated. Not essential for functional expression and membrane targeting. Highly expressed in roots. Expressed in flowers, leaves and stems. Expressed in the vascular tissues of every organs. In roots, leaves and flower peduncles, it is only expressed in the phloem tissues. Not expressed in root peripheral cells.

Its subcellular location is the cell membrane. It carries out the reaction Na(+)(in) = Na(+)(out). In terms of biological role, sodium transporter protein, which plays a central role in plant tolerance to salt. Upon prolongated exposure to high concentrations, Na(+) translocates from the roots to the transpiring leaves where it can increase to toxic level. Involved in Na(+) recirculation from shoots to roots, probably by mediating Na(+) loading into the phloem sap in shoots and unloading in roots, thereby removing large amounts of Na(+) from the shoot. Does not transport K(+) but regulates K(+) nutrient status via its ability to facilitate Na(+) homeostasis. Probably not involved in root uptake of Na(+). The sequence is that of Sodium transporter HKT1 (HKT1) from Arabidopsis thaliana (Mouse-ear cress).